We begin with the raw amino-acid sequence, 228 residues long: Putative elongation factor Tu-like protein (228 aa).

In terms of domain architecture, tr-type G spans 6-212 (KPHINVGTIG…LPIREKDNPF (207 aa)). The tract at residues 15–22 (GHVDHGKT) is G1. Positions 59 to 63 (GITIS) are G2. Residues 80 to 83 (DCPG) form a G3 region. Residues 135 to 138 (NKCD) are G4. Positions 173-175 (SAV) are G5.

Belongs to the TRAFAC class translation factor GTPase superfamily. Classic translation factor GTPase family. EF-Tu/EF-1A subfamily.

The protein is Putative elongation factor Tu-like protein of Ehrlichia ruminantium (strain Welgevonden).